A 219-amino-acid polypeptide reads, in one-letter code: 2-C-methyl-D-erythritol 4-phosphate cytidylyltransferase (219 aa).

Belongs to the IspD/TarI cytidylyltransferase family. IspD subfamily.

It catalyses the reaction 2-C-methyl-D-erythritol 4-phosphate + CTP + H(+) = 4-CDP-2-C-methyl-D-erythritol + diphosphate. It functions in the pathway isoprenoid biosynthesis; isopentenyl diphosphate biosynthesis via DXP pathway; isopentenyl diphosphate from 1-deoxy-D-xylulose 5-phosphate: step 2/6. Its function is as follows. Catalyzes the formation of 4-diphosphocytidyl-2-C-methyl-D-erythritol from CTP and 2-C-methyl-D-erythritol 4-phosphate (MEP). This is 2-C-methyl-D-erythritol 4-phosphate cytidylyltransferase from Endomicrobium trichonymphae.